The following is a 79-amino-acid chain: Conotoxin Vi6.4 (79 aa).

An N-terminal signal peptide occupies residues 1-22 (MKLTCVLIITVLFLTASQLITA). Residues 23–47 (DYSGDKRQYRAVRLRDEMRNFKGAR) constitute a propeptide that is removed on maturation. Cystine bridges form between Cys-49–Cys-62, Cys-56–Cys-67, and Cys-61–Cys-77. 2 positions are modified to 4-hydroxyproline: Pro-60 and Pro-63.

It belongs to the conotoxin O1 superfamily. As to expression, expressed by the venom duct.

Its subcellular location is the secreted. Its function is as follows. Ion channel inhibitor that inhibits the increase in intracellular calcium upon depolarization in DRG neurons. In vivo, both intraperitoneal and intracranial injections into mice induce hyperactivity. This is Conotoxin Vi6.4 from Conus virgo (Virgin cone).